We begin with the raw amino-acid sequence, 520 residues long: MEVLESGEQGVLQWDRKLSELSEPGDGEALMYHTHFSELLDEFSQNVLGQLLNDPFLSEKSVSMEVEPSPTSPAPLIQAEHSYSLCEEPRAQSPFTHITTSDSFNDDEVESEKWYLSTDFPSTSIKTEPVTDEPPPGLVPSVTLTITAISTPLEKEEPPLEMNTGVDSSCQTIIPKIKLEPHEVDQFLNFSPKEAPVDHLHLPPTPPSSHGSDSEGSLSPNPRLHPFSLPQTHSPSRAAPRAPSALSSSPLLTAPHKLQGSGPLVLTEEEKRTLIAEGYPIPTKLPLSKSEEKALKKIRRKIKNKISAQESRRKKKEYMDSLEKKVESCSTENLELRKKVEVLENTNRTLLQQLQKLQTLVMGKVSRTCKLAGTQTGTCLMVVVLCFAVAFGSFFQGYGPYPSATKMALPSQHSLQEPYTASVVRSRNLLIYEEHSPPEESSSPGSAGELGGWDRGSSLLRVSGLESRPDVDLPHFIISNETSLEKSVLLELQQHLVSAKLEGNETLKVVELDRRVNTTF.

At 1-379 (MEVLESGEQG…KLAGTQTGTC (379 aa)) the chain is on the cytoplasmic side. Residue serine 93 is modified to Phosphoserine. Lysine 178 participates in a covalent cross-link: Glycyl lysine isopeptide (Lys-Gly) (interchain with G-Cter in SUMO2). Residue serine 191 is modified to Phosphoserine. The tract at residues 195–264 (APVDHLHLPP…PHKLQGSGPL (70 aa)) is disordered. Low complexity-rich tracts occupy residues 208–220 (SSHGSDSEGSLSP) and 234–255 (SPSRAAPRAPSALSSSPLLTAP). Residues 294–357 (ALKKIRRKIK…RTLLQQLQKL (64 aa)) enclose the bZIP domain. The segment at 296–325 (KKIRRKIKNKISAQESRRKKKEYMDSLEKK) is basic motif. Positions 336-357 (LRKKVEVLENTNRTLLQQLQKL) are leucine-zipper. A helical; Signal-anchor for type II membrane protein transmembrane segment spans residues 380 to 400 (LMVVVLCFAVAFGSFFQGYGP). Residues 401 to 520 (YPSATKMALP…ELDRRVNTTF (120 aa)) are Lumenal-facing. The S1P recognition motif lies at 427 to 430 (RNLL). Residues asparagine 480, asparagine 504, and asparagine 517 are each glycosylated (N-linked (GlcNAc...) asparagine).

The protein belongs to the bZIP family. ATF subfamily. In terms of assembly, binds DNA as a dimer. Upon ER stress, translocated to the Golgi apparatus, where it is processed by regulated intramembrane proteolysis (RIP) to release the cytosol-facing N-terminal transcription factor domain. The cleavage is performed sequentially by site-1 and site-2 proteases (S1P/MBTPS1 and S2P/MBTPS2). Post-translationally, N-glycosylated. In terms of processing, ubiquitinated by HRD1/SYVN1; undergoes 'Lys-48'-linked ubiquitination, followed by rapid proteasomal degradation under normal conditions. Upon ER stress, SYVN1 E3 ubiquitin-protein ligase dissociates from its substrate, ubiquitination does not occur and CREB3L2 is stabilized. As to expression, widely expressed with highest levels in placenta, lung, spleen and intestine, and lowest levels in heart, brain, skeletal muscle, thymus, colon and leukocytes. In fetal tissues, the weakest expression is detected in brain and heart.

It localises to the endoplasmic reticulum membrane. The protein localises to the nucleus. Transcription factor involved in unfolded protein response (UPR). In the absence of endoplasmic reticulum (ER) stress, inserted into ER membranes, with N-terminal DNA-binding and transcription activation domains oriented toward the cytosolic face of the membrane. In response to ER stress, transported to the Golgi, where it is cleaved in a site-specific manner by resident proteases S1P/MBTPS1 and S2P/MBTPS2. The released N-terminal cytosolic domain is translocated to the nucleus to effect transcription of specific target genes. Plays a critical role in chondrogenesis by activating the transcription of SEC23A, which promotes the transport and secretion of cartilage matrix proteins, and possibly that of ER biogenesis-related genes. In a neuroblastoma cell line, protects cells from ER stress-induced death. In vitro activates transcription of target genes via direct binding to the CRE site. In Homo sapiens (Human), this protein is Cyclic AMP-responsive element-binding protein 3-like protein 2 (CREB3L2).